Consider the following 233-residue polypeptide: Leucyl/phenylalanyl-tRNA--protein transferase (233 aa).

Belongs to the L/F-transferase family.

It is found in the cytoplasm. It catalyses the reaction N-terminal L-lysyl-[protein] + L-leucyl-tRNA(Leu) = N-terminal L-leucyl-L-lysyl-[protein] + tRNA(Leu) + H(+). The enzyme catalyses N-terminal L-arginyl-[protein] + L-leucyl-tRNA(Leu) = N-terminal L-leucyl-L-arginyl-[protein] + tRNA(Leu) + H(+). The catalysed reaction is L-phenylalanyl-tRNA(Phe) + an N-terminal L-alpha-aminoacyl-[protein] = an N-terminal L-phenylalanyl-L-alpha-aminoacyl-[protein] + tRNA(Phe). Functionally, functions in the N-end rule pathway of protein degradation where it conjugates Leu, Phe and, less efficiently, Met from aminoacyl-tRNAs to the N-termini of proteins containing an N-terminal arginine or lysine. This chain is Leucyl/phenylalanyl-tRNA--protein transferase, found in Klebsiella pneumoniae subsp. pneumoniae (strain ATCC 700721 / MGH 78578).